The sequence spans 220 residues: Ribosomal RNA large subunit methyltransferase E (220 aa).

Residues 1-10 (MSRSGKDPGK) are compositionally biased toward basic and acidic residues. A disordered region spans residues 1–24 (MSRSGKDPGKRVKTARKRSASSTR). The S-adenosyl-L-methionine site is built by Gly-75, Trp-77, Asp-94, Asp-110, and Asp-134. Catalysis depends on Lys-174, which acts as the Proton acceptor.

The protein belongs to the class I-like SAM-binding methyltransferase superfamily. RNA methyltransferase RlmE family.

It localises to the cytoplasm. It catalyses the reaction uridine(2552) in 23S rRNA + S-adenosyl-L-methionine = 2'-O-methyluridine(2552) in 23S rRNA + S-adenosyl-L-homocysteine + H(+). Its function is as follows. Specifically methylates the uridine in position 2552 of 23S rRNA at the 2'-O position of the ribose in the fully assembled 50S ribosomal subunit. This is Ribosomal RNA large subunit methyltransferase E from Erythrobacter litoralis (strain HTCC2594).